A 167-amino-acid polypeptide reads, in one-letter code: Signal peptidase complex catalytic subunit SEC11 (167 aa).

At 1–12 (MNIRHQLVQFLN) the chain is on the cytoplasmic side. The helical; Signal-anchor for type II membrane protein transmembrane segment at 13–30 (LALVLSSAFMAWKTLSVI) threads the bilayer. Residues 31–167 (TNSHSPIVVV…MGISSLLSNE (137 aa)) lie on the Lumenal side of the membrane. Active-site charge relay system residues include Ser-44, His-83, and Asp-109. A C-terminal short (CTS) helix region spans residues 153–164 (TLLGLMGISSLL).

Belongs to the peptidase S26B family. As to quaternary structure, component of the signal peptidase complex (SPC) composed of a catalytic subunit SEC11 and three accessory subunits SPC1, SPC2 and SPC3. The complex induces a local thinning of the ER membrane which is used to measure the length of the signal peptide (SP) h-region of protein substrates. This ensures the selectivity of the complex towards h-regions shorter than 18-20 amino acids. SPC associates with the translocon complex.

Its subcellular location is the endoplasmic reticulum membrane. The catalysed reaction is Cleavage of hydrophobic, N-terminal signal or leader sequences from secreted and periplasmic proteins.. Catalytic component of the signal peptidase complex (SPC) which catalyzes the cleavage of N-terminal signal sequences from nascent proteins as they are translocated into the lumen of the endoplasmic reticulum. Specifically cleaves N-terminal signal peptides that contain a hydrophobic alpha-helix (h-region) shorter than 18-20 amino acids. This Debaryomyces hansenii (strain ATCC 36239 / CBS 767 / BCRC 21394 / JCM 1990 / NBRC 0083 / IGC 2968) (Yeast) protein is Signal peptidase complex catalytic subunit SEC11 (SEC11).